A 117-amino-acid chain; its full sequence is UPF0295 protein GTNG_0491 (117 aa).

The next 2 membrane-spanning stretches (helical) occupy residues Ile-12–Phe-32 and Leu-42–Gly-62.

This sequence belongs to the UPF0295 family.

It localises to the cell membrane. The polypeptide is UPF0295 protein GTNG_0491 (Geobacillus thermodenitrificans (strain NG80-2)).